The following is a 390-amino-acid chain: Queuine tRNA-ribosyltransferase (390 aa).

Catalysis depends on Asp92, which acts as the Proton acceptor. Substrate-binding positions include 92 to 96 (DSGGF), Asp146, Gln195, and Gly222. The interval 253-259 (GVGTPED) is RNA binding. Asp272 serves as the catalytic Nucleophile. Positions 277 to 281 (TRNAR) are RNA binding; important for wobble base 34 recognition. Cys310, Cys312, Cys315, and His354 together coordinate Zn(2+).

Belongs to the queuine tRNA-ribosyltransferase family. Homodimer. Within each dimer, one monomer is responsible for RNA recognition and catalysis, while the other monomer binds to the replacement base PreQ1. Zn(2+) serves as cofactor.

It catalyses the reaction 7-aminomethyl-7-carbaguanine + guanosine(34) in tRNA = 7-aminomethyl-7-carbaguanosine(34) in tRNA + guanine. It participates in tRNA modification; tRNA-queuosine biosynthesis. Its function is as follows. Catalyzes the base-exchange of a guanine (G) residue with the queuine precursor 7-aminomethyl-7-deazaguanine (PreQ1) at position 34 (anticodon wobble position) in tRNAs with GU(N) anticodons (tRNA-Asp, -Asn, -His and -Tyr). Catalysis occurs through a double-displacement mechanism. The nucleophile active site attacks the C1' of nucleotide 34 to detach the guanine base from the RNA, forming a covalent enzyme-RNA intermediate. The proton acceptor active site deprotonates the incoming PreQ1, allowing a nucleophilic attack on the C1' of the ribose to form the product. After dissociation, two additional enzymatic reactions on the tRNA convert PreQ1 to queuine (Q), resulting in the hypermodified nucleoside queuosine (7-(((4,5-cis-dihydroxy-2-cyclopenten-1-yl)amino)methyl)-7-deazaguanosine). The protein is Queuine tRNA-ribosyltransferase of Acidovorax ebreus (strain TPSY) (Diaphorobacter sp. (strain TPSY)).